The primary structure comprises 411 residues: Heterogeneous nuclear ribonucleoprotein 1 (411 aa).

The region spanning glycine 6–serine 82 is the RRM 1 domain. 3 disordered regions span residues methionine 81 to glycine 103, lysine 183 to methionine 221, and alanine 358 to glutamine 411. Positions glutamine 87–serine 101 are enriched in polar residues. One can recognise an RRM 2 domain in the interval lysine 110–proline 187. Gly residues-rich tracts occupy residues proline 192–glycine 212, valine 362–aspartate 387, and glycine 397–glutamine 411. Residues glycine 341–tryptophan 390 form a nuclear targeting sequence (M9) region.

In terms of assembly, component of the spliceosome. Interacts with TRN1.

It localises to the nucleus. It is found in the cytoplasm. Its function is as follows. Involved with pre-mRNA processing. Forms complexes (ribonucleosomes) with at least 20 other different hnRNP and heterogeneous nuclear RNA in the nucleus. In terms of biological role, involved in the packaging of pre-mRNA into hnRNP particles, transport of poly(A) mRNA from the nucleus to the cytoplasm and may modulate splice site selection. This is Heterogeneous nuclear ribonucleoprotein 1 (RNP1) from Arabidopsis thaliana (Mouse-ear cress).